The primary structure comprises 556 residues: MKSDIEIAQSVPLKPITEIVKKVGIDGDDLELYGNYKAKLSFEKIKSVKGNKPGKLILVTAINPTPAGEGKSTMSIGLADALTKIGKKTMLALREPSLGPVMGIKGGAAGGGYAQVLPMEDINLHFTGDMHAITTAHNALSALIDNHLQQGNELGIDPRRIIWKRVLDLNDRSLRQVIVGLGSPVNGVPREDGFDITVASEVMAILCLATDLKDLKARLANIVIAYRYDKSPVYVRDLKVEGALALILKDAIKPNLVQTIYGTPAFVHGGPFANIAHGCNSVLATSTALRLADYTVTEAGFGADLGAEKFLNIKTPNLPKAPDAVVIVATLRALKMHGGVAKADLTFENTAAVRSGFANLKRHVENIRKFNIPVVVAINEFVTDTKAEIQVLKELCAEIAVPVELASVWAKGADGGIALANAVVSAIAEESAAYKRLYADKDSLEEKLRAIVTEIYGGRAVQFGPKAKNQLKQFAQFGWDQLPVCMAKTQYSFSDDPSLLGAPDQFDITIRELVPKTGAGFIVALTGDVMTMPGLPKTPAAMKMDVTEDGTAVGLF.

65–72 (TPAGEGKS) contacts ATP.

It belongs to the formate--tetrahydrofolate ligase family.

The enzyme catalyses (6S)-5,6,7,8-tetrahydrofolate + formate + ATP = (6R)-10-formyltetrahydrofolate + ADP + phosphate. It functions in the pathway one-carbon metabolism; tetrahydrofolate interconversion. The polypeptide is Formate--tetrahydrofolate ligase (Streptococcus equi subsp. zooepidemicus (strain H70)).